We begin with the raw amino-acid sequence, 124 residues long: Ribonuclease pancreatic (124 aa).

The interval 1 to 21 (AESSAMKFQRQHMDSDGHPDT) is disordered. Substrate-binding residues include lysine 7 and arginine 10. Residue histidine 12 is the Proton acceptor of the active site. Disulfide bonds link cysteine 26/cysteine 84, cysteine 40/cysteine 95, cysteine 58/cysteine 110, and cysteine 65/cysteine 72. Residues 41-45 (KPVNT), lysine 66, and arginine 85 each bind substrate. Histidine 119 functions as the Proton donor in the catalytic mechanism.

It belongs to the pancreatic ribonuclease family. Monomer. Interacts with and forms tight 1:1 complexes with RNH1. Dimerization of two such complexes may occur. Interaction with RNH1 inhibits this protein. As to expression, pancreas.

It localises to the secreted. The catalysed reaction is an [RNA] containing cytidine + H2O = an [RNA]-3'-cytidine-3'-phosphate + a 5'-hydroxy-ribonucleotide-3'-[RNA].. The enzyme catalyses an [RNA] containing uridine + H2O = an [RNA]-3'-uridine-3'-phosphate + a 5'-hydroxy-ribonucleotide-3'-[RNA].. Functionally, endonuclease that catalyzes the cleavage of RNA on the 3' side of pyrimidine nucleotides. Acts on single-stranded and double-stranded RNA. This is Ribonuclease pancreatic (RNASE1) from Galea musteloides (Common yellow-toothed cavy).